Here is an 892-residue protein sequence, read N- to C-terminus: Integrator complex subunit 6 (892 aa).

Residues 3 to 227 form the VWFA domain; it reads ILLFLIDTSA…QCLESLVQKV (225 aa). An Inhibitory loop motif is present at residues 630–637; it reads MMIDEADE. 3 disordered regions span residues 665-692, 711-754, and 771-793; these read MSPL…GTQG, VGGT…AAPD, and PDHT…EVNE.

Belongs to the Integrator subunit 6 family. In terms of assembly, component of the Integrator complex, composed of core subunits INTS1, INTS2, INTS3, INTS4, INTS5, INTS6, INTS7, INTS8, INTS9/RC74, INTS10, INTS11/CPSF3L, INTS12, INTS13, INTS14 and INTS15. The core complex associates with protein phosphatase 2A subunits PPP2CA and PPP2R1A, to form the Integrator-PP2A (INTAC) complex.

The protein resides in the nucleus. The protein localises to the chromosome. Its function is as follows. Component of the integrator complex, a multiprotein complex that terminates RNA polymerase II (Pol II) transcription in the promoter-proximal region of genes. The integrator complex provides a quality checkpoint during transcription elongation by driving premature transcription termination of transcripts that are unfavorably configured for transcriptional elongation: the complex terminates transcription by (1) catalyzing dephosphorylation of the C-terminal domain (CTD) of Pol II subunit POLR2A/RPB1 and SUPT5H/SPT5, (2) degrading the exiting nascent RNA transcript via endonuclease activity and (3) promoting the release of Pol II from bound DNA. The integrator complex is also involved in terminating the synthesis of non-coding Pol II transcripts, such as enhancer RNAs (eRNAs), small nuclear RNAs (snRNAs), telomerase RNAs and long non-coding RNAs (lncRNAs). Within the integrator complex, INTS6 acts as a molecular adapter that promotes assembly of protein phosphatase 2A (PP2A) subunits to the integrator core complex, promoting recruitment of PP2A to transcription pause-release checkpoint. The polypeptide is Integrator complex subunit 6 (ints6l) (Danio rerio (Zebrafish)).